The following is a 173-amino-acid chain: Pyrimidine operon regulatory protein (173 aa).

Residues 40 to 41 (TR), 97 to 105 (DDVLYTGRT), and R130 each bind substrate. The PRPP-binding motif lies at 93–105 (VILVDDVLYTGRT).

The protein belongs to the purine/pyrimidine phosphoribosyltransferase family. PyrR subfamily.

Its function is as follows. Regulates transcriptional attenuation of the pyrimidine nucleotide (pyr) operon in response to exogenous pyrimidines, probably by binding to specific sites on pyr mRNA. This probably disrupts an antiterminator hairpin in the RNA and favors formation of a downstream transcription terminator, leading to a reduced expression of downstream genes. This Lactococcus lactis subsp. lactis (strain IL1403) (Streptococcus lactis) protein is Pyrimidine operon regulatory protein.